The sequence spans 440 residues: Xaa-Pro dipeptidase (440 aa).

Residues Asp-244, Asp-255, His-335, Glu-380, and Glu-419 each coordinate Mn(2+).

It belongs to the peptidase M24B family. Bacterial-type prolidase subfamily. Mn(2+) serves as cofactor.

It catalyses the reaction Xaa-L-Pro dipeptide + H2O = an L-alpha-amino acid + L-proline. Its function is as follows. Splits dipeptides with a prolyl residue in the C-terminal position. The sequence is that of Xaa-Pro dipeptidase from Shewanella baltica (strain OS195).